We begin with the raw amino-acid sequence, 160 residues long: Ubiquitin-like protein 4A (160 aa).

Residues 1-76 (MQLTVKALQG…LNLVVKPLEK (76 aa)) form the Ubiquitin-like domain. K48 is covalently cross-linked (Glycyl lysine isopeptide (Lys-Gly) (interchain with G-Cter in ubiquitin)). The tract at residues 99–141 (WQLIAKVLARHFSAADASRVLDQLQRDYERSLSRLTLDDIERL) is required and sufficient for interaction with BAG6.

As to quaternary structure, component of the BAG6/BAT3 complex, at least composed of BAG6, UBL4A and GET4/TRC35. Interacts with BAG6; the interaction is direct and required for UBL4A protein stability. Interacts with USP13; may be indirect via BAG6. Post-translationally, polyubiquitinated. Ubiquitination by AMFR and deubiquitination by USP13 may regulate the interaction between the BAG6/BAT complex and SGTA and therefore may regulate client proteins fate.

The protein localises to the cytoplasm. Its subcellular location is the cytosol. It is found in the nucleus. Functionally, as part of a cytosolic protein quality control complex, the BAG6/BAT3 complex, maintains misfolded and hydrophobic patches-containing proteins in a soluble state and participates in their proper delivery to the endoplasmic reticulum or alternatively can promote their sorting to the proteasome where they undergo degradation. The BAG6/BAT3 complex is involved in the post-translational delivery of tail-anchored/type II transmembrane proteins to the endoplasmic reticulum membrane. Recruited to ribosomes, it interacts with the transmembrane region of newly synthesized tail-anchored proteins and together with SGTA and ASNA1 mediates their delivery to the endoplasmic reticulum. Client proteins that cannot be properly delivered to the endoplasmic reticulum are ubiquitinated and sorted to the proteasome. Similarly, the BAG6/BAT3 complex also functions as a sorting platform for proteins of the secretory pathway that are mislocalized to the cytosol either delivering them to the proteasome for degradation or to the endoplasmic reticulum. The BAG6/BAT3 complex also plays a role in the endoplasmic reticulum-associated degradation (ERAD), a quality control mechanism that eliminates unwanted proteins of the endoplasmic reticulum through their retrotranslocation to the cytosol and their targeting to the proteasome. It maintains these retrotranslocated proteins in an unfolded yet soluble state condition in the cytosol to ensure their proper delivery to the proteasome. The sequence is that of Ubiquitin-like protein 4A (UBL4A) from Rhinolophus ferrumequinum (Greater horseshoe bat).